The primary structure comprises 338 residues: Ferredoxin--NADP reductase (338 aa).

D38, Q46, Y51, V91, F125, D291, and T331 together coordinate FAD.

It belongs to the ferredoxin--NADP reductase type 2 family. Homodimer. FAD serves as cofactor.

It catalyses the reaction 2 reduced [2Fe-2S]-[ferredoxin] + NADP(+) + H(+) = 2 oxidized [2Fe-2S]-[ferredoxin] + NADPH. The protein is Ferredoxin--NADP reductase of Orientia tsutsugamushi (strain Boryong) (Rickettsia tsutsugamushi).